The following is a 132-amino-acid chain: UPF0357 protein YCL012C (132 aa).

A signal peptide spans 1–25 (MWDLFYFKVFFWVVLISLCIFMVHR).

It belongs to the UPF0357 family.

The chain is UPF0357 protein YCL012C (YCL012C) from Saccharomyces bayanus (Yeast).